The primary structure comprises 198 residues: Dephospho-CoA kinase (198 aa).

A DPCK domain is found at 4-198 (IIGITGGIAS…DSQLRRLQNE (195 aa)). Position 12–17 (12–17 (ASGKST)) interacts with ATP.

The protein belongs to the CoaE family.

The protein resides in the cytoplasm. It carries out the reaction 3'-dephospho-CoA + ATP = ADP + CoA + H(+). Its pathway is cofactor biosynthesis; coenzyme A biosynthesis; CoA from (R)-pantothenate: step 5/5. Its function is as follows. Catalyzes the phosphorylation of the 3'-hydroxyl group of dephosphocoenzyme A to form coenzyme A. This Streptococcus mutans serotype c (strain ATCC 700610 / UA159) protein is Dephospho-CoA kinase.